A 286-amino-acid chain; its full sequence is E3 ubiquitin-protein ligase RNF170 (286 aa).

Residues 1–52 (MQRYWRFQDNKIQDICFGVLGESWIQRPVMARYYSEGQSLQQDDSFIEGVSD) lie on the Lumenal side of the membrane. Residues 53-73 (QVLVAVVVSLALTATLLYALL) traverse the membrane as a helical segment. Over 74-229 (RNVQQNIHPE…GGLFWMFRIR (156 aa)) the chain is Cytoplasmic. The RING-type zinc finger occupies 115 to 158 (CPICLHQASFPVETNCGHLFCGSCIIAYWRYGSWLGAISCPICR). Residues 230–250 (IMLCLMGAFFYLISPLDFVPE) traverse the membrane as a helical segment. Residue A251 is a topological domain, lumenal. Residues 252–272 (LFGILGFLDDFFVIFLLLIYI) traverse the membrane as a helical segment. Residues 273–286 (SIMYREVITQRLTR) are Cytoplasmic-facing.

As to quaternary structure, constitutively associated with the ERLIN1/ERLIN 2 complex. Interacts with activated ITPR1.

The protein localises to the endoplasmic reticulum membrane. The enzyme catalyses S-ubiquitinyl-[E2 ubiquitin-conjugating enzyme]-L-cysteine + [acceptor protein]-L-lysine = [E2 ubiquitin-conjugating enzyme]-L-cysteine + N(6)-ubiquitinyl-[acceptor protein]-L-lysine.. It participates in protein modification; protein ubiquitination. In terms of biological role, E3 ubiquitin-protein ligase that plays an essential role in stimulus-induced inositol 1,4,5-trisphosphate receptor type 1 (ITPR1) ubiquitination and degradation via the endoplasmic reticulum-associated degradation (ERAD) pathway. Also involved in ITPR1 turnover in resting cells. Selectively inhibits the TLR3-triggered innate immune response by promoting the 'Lys-48'-linked polyubiquitination and degradation of TLR3. The sequence is that of E3 ubiquitin-protein ligase RNF170 (Rnf170) from Mus musculus (Mouse).